A 205-amino-acid chain; its full sequence is Probable GTP-binding protein EngB (205 aa).

The region spanning 22–196 (NLPEVAFVGR…LKVLDEFIHK (175 aa)) is the EngB-type G domain. GTP-binding positions include 30–37 (GRSNVGKS), 57–61 (GRTQL), 76–79 (DLPG), 143–146 (TKVD), and 175–177 (FSA). Mg(2+) contacts are provided by Ser37 and Thr59.

Belongs to the TRAFAC class TrmE-Era-EngA-EngB-Septin-like GTPase superfamily. EngB GTPase family. Requires Mg(2+) as cofactor.

In terms of biological role, necessary for normal cell division and for the maintenance of normal septation. The sequence is that of Probable GTP-binding protein EngB from Desulforamulus reducens (strain ATCC BAA-1160 / DSM 100696 / MI-1) (Desulfotomaculum reducens).